The sequence spans 357 residues: Nitronate monooxygenase npaC (357 aa).

FMN contacts are provided by Gln-167, Gly-172, and Gly-206.

It belongs to the nitronate monooxygenase family. NMO class I subfamily. It depends on FMN as a cofactor.

Functionally, nitronate monooxygenase; part of the gene cluster that mediates the biosynthesis of the deadly neurotoxic nitroalkane 3-nitropropanoic acid (3-NPA) that acts as an antimetabolite of succinate and irreversibly inhibits succinate dehydrogenase and disrupts mitochondrial oxidative phosphorylation. Catalyzes the oxidation of 3-NPA to nitrite and malonic semialdehyde. NpaC is not conserved in all fungal npa clusters and, while it is possible that it serves as a self-protection mechanism against accumulation of 3-NPA (by npaA and npaB) in the producing host, the more likely scenario may be the three enzymes representing an alternative catabolic pathway of aspartate to generate readily metabolizable nitrogen and carbon sources. In Metarhizium robertsii (strain ARSEF 23 / ATCC MYA-3075) (Metarhizium anisopliae (strain ARSEF 23)), this protein is Nitronate monooxygenase npaC.